A 764-amino-acid chain; its full sequence is PFL-like enzyme TdcE (764 aa).

The PFL domain maps to 7-629 (TSDKLYADAW…KTGNTPDGRR (623 aa)). Cys423 serves as the catalytic S-acetylcysteine intermediate. Cys424 serves as the catalytic Cysteine radical intermediate. The interval 622–645 (GNTPDGRRAGTPFAPGANPMHGRD) is disordered. The 129-residue stretch at 636-764 (PGANPMHGRD…VISRTFTQAL (129 aa)) folds into the Glycine radical domain. Position 739 is a glycine radical (Gly739).

It belongs to the glycyl radical enzyme (GRE) family. PFL subfamily.

It localises to the cytoplasm. It catalyses the reaction 2-oxobutanoate + CoA = propanoyl-CoA + formate. The catalysed reaction is formate + acetyl-CoA = pyruvate + CoA. Its pathway is amino-acid degradation; L-threonine degradation via propanoate pathway; propanoate from L-threonine: step 2/4. With respect to regulation, dependent on PFL-activase. Catalyzes the cleavage of 2-ketobutyrate to propionyl-CoA and formate. It can also use pyruvate as substrate. This is PFL-like enzyme TdcE (tdcE) from Escherichia coli (strain K12).